The chain runs to 800 residues: Putative antiporter subunit mnhA2 (800 aa).

The next 20 helical transmembrane spans lie at methionine 1–serine 21, isoleucine 33–isoleucine 53, glycine 78–alanine 98, leucine 118–phenylalanine 138, phenylalanine 167–methionine 187, alanine 207–phenylalanine 227, threonine 241–leucine 261, tyrosine 273–leucine 293, glycine 300–glycine 320, isoleucine 331–isoleucine 351, leucine 387–serine 407, phenylalanine 424–phenylalanine 444, proline 472–valine 492, glycine 527–isoleucine 547, isoleucine 595–leucine 615, glycine 627–isoleucine 647, leucine 651–methionine 671, leucine 676–serine 696, isoleucine 712–alanine 732, and leucine 768–leucine 788.

It belongs to the CPA3 antiporters (TC 2.A.63) subunit A family. In terms of assembly, may form a heterooligomeric complex that consists of seven subunits: mnhA2, mnhB2, mnhC2, mnhD2, mnhE2, mnhF2 and mnhG2.

Its subcellular location is the cell membrane. The chain is Putative antiporter subunit mnhA2 (mnhA2) from Staphylococcus aureus (strain MRSA252).